A 487-amino-acid chain; its full sequence is Probable Xaa-Pro aminopeptidase MGYG_06974 (487 aa).

Positions 255, 266, 414, and 458 each coordinate Mn(2+).

Belongs to the peptidase M24B family. Mn(2+) is required as a cofactor.

It carries out the reaction Release of any N-terminal amino acid, including proline, that is linked to proline, even from a dipeptide or tripeptide.. In terms of biological role, catalyzes the removal of a penultimate prolyl residue from the N-termini of peptides. The sequence is that of Probable Xaa-Pro aminopeptidase MGYG_06974 from Arthroderma gypseum (strain ATCC MYA-4604 / CBS 118893) (Microsporum gypseum).